The following is a 462-amino-acid chain: Beta-glucosidase 1A (462 aa).

3 residues coordinate substrate: glutamine 20, histidine 123, and asparagine 169. Glutamate 170 acts as the Proton donor in catalysis. Tyrosine 301 contributes to the substrate binding site. Glutamate 365 (nucleophile) is an active-site residue. Substrate-binding positions include tryptophan 415 and glutamate 422–tryptophan 423.

This sequence belongs to the glycosyl hydrolase 1 family.

It carries out the reaction Hydrolysis of terminal, non-reducing beta-D-glucosyl residues with release of beta-D-glucose.. Functionally, plays an important role in cellulose degradation. Shows hydrolytic activity against several glycosidic compounds. The chain is Beta-glucosidase 1A from Phanerodontia chrysosporium (White-rot fungus).